We begin with the raw amino-acid sequence, 207 residues long: Guanylate kinase (207 aa).

Residues G4 to R184 form the Guanylate kinase-like domain. ATP is bound at residue A11–S18.

Belongs to the guanylate kinase family.

The protein localises to the cytoplasm. It carries out the reaction GMP + ATP = GDP + ADP. In terms of biological role, essential for recycling GMP and indirectly, cGMP. The polypeptide is Guanylate kinase (gmk) (Salmonella typhimurium (strain LT2 / SGSC1412 / ATCC 700720)).